The primary structure comprises 273 residues: Cell division protein ZipA (273 aa).

Position 1 (methionine 1) is a topological domain, periplasmic. A helical transmembrane segment spans residues 2 to 22 (DIGLREWLIVIGIIVIAGILF). The Cytoplasmic segment spans residues 23 to 273 (DGWRRMRGGK…ERRQMTIKQR (251 aa)). The disordered stretch occupies residues 61-127 (VVNREHEPSL…DLQERPQKEQ (67 aa)).

Belongs to the ZipA family. Interacts with FtsZ via their C-terminal domains.

It is found in the cell inner membrane. In terms of biological role, essential cell division protein that stabilizes the FtsZ protofilaments by cross-linking them and that serves as a cytoplasmic membrane anchor for the Z ring. Also required for the recruitment to the septal ring of downstream cell division proteins. The protein is Cell division protein ZipA of Stutzerimonas stutzeri (strain A1501) (Pseudomonas stutzeri).